Reading from the N-terminus, the 185-residue chain is Protein LPA2 (185 aa).

The N-terminal 46 residues, 1–46 (MALQIHSPCSFSTRPYHLFFTTRNPRFAIKCQNSQIESDTTEDPSR), are a transit peptide targeting the chloroplast. Positions 35–105 (QIESDTTEDP…VFMSEEGAAK (71 aa)) are disordered. The segment covering 47–75 (SKNSSSSGVGFGSPASSSSPAKKLSAATS) has biased composition (low complexity). The segment covering 83-92 (KREVNRRAPV) has biased composition (basic and acidic residues). 2 helical membrane-spanning segments follow: residues 115-135 (AFLLTWLGLGIVILIEGIILA) and 152-172 (VYPVFTPSVVLFVAGTTAYGV).

It is found in the plastid. Its subcellular location is the chloroplast membrane. The sequence is that of Protein LPA2 from Arabidopsis thaliana (Mouse-ear cress).